Consider the following 317-residue polypeptide: Methionyl-tRNA formyltransferase (317 aa).

Residue 109-112 coordinates (6S)-5,6,7,8-tetrahydrofolate; that stretch reads SLLP.

Belongs to the Fmt family.

It carries out the reaction L-methionyl-tRNA(fMet) + (6R)-10-formyltetrahydrofolate = N-formyl-L-methionyl-tRNA(fMet) + (6S)-5,6,7,8-tetrahydrofolate + H(+). Functionally, attaches a formyl group to the free amino group of methionyl-tRNA(fMet). The formyl group appears to play a dual role in the initiator identity of N-formylmethionyl-tRNA by promoting its recognition by IF2 and preventing the misappropriation of this tRNA by the elongation apparatus. The polypeptide is Methionyl-tRNA formyltransferase (Halalkalibacterium halodurans (strain ATCC BAA-125 / DSM 18197 / FERM 7344 / JCM 9153 / C-125) (Bacillus halodurans)).